We begin with the raw amino-acid sequence, 436 residues long: Na(+)/H(+) antiporter NhaA (436 aa).

11 consecutive transmembrane segments (helical) span residues 14–34, 59–79, 95–115, 125–145, 152–172, 176–196, 214–234, 300–320, 336–356, 374–394, and 407–427; these read AGGI…NSTW, LHHW…GLEL, ALPV…YHQF, WGIP…LLAW, IIFL…VIAI, PALH…LLLF, FWYF…FLAF, AIQP…NAGI, IGTC…SSWL, LLGA…IGQL, and LGIL…LFQV.

It belongs to the NhaA Na(+)/H(+) (TC 2.A.33) antiporter family.

Its subcellular location is the cell inner membrane. It catalyses the reaction Na(+)(in) + 2 H(+)(out) = Na(+)(out) + 2 H(+)(in). Its function is as follows. Na(+)/H(+) antiporter that extrudes sodium in exchange for external protons. This chain is Na(+)/H(+) antiporter NhaA, found in Acidithiobacillus ferrooxidans (strain ATCC 23270 / DSM 14882 / CIP 104768 / NCIMB 8455) (Ferrobacillus ferrooxidans (strain ATCC 23270)).